The sequence spans 389 residues: bZIP transcription factor 68 (389 aa).

Basic and acidic residues predominate over residues 1–16 (MGSSEMEKSGKEKEPK). Disordered regions lie at residues 1–42 (MGSS…VSAG), 124–154 (MAEASGNTGSVIEGDGKPSDGKEKLPIKRSK), 170–236 (AGKN…NLPV), 285–318 (QPWLQVSDEREIKRQRRKQSNRESARRSRLRKQA), and 356–389 (SSLKNKFSSAPSLEGGDLDKNEQEPQRSTRQDVA). The segment covering 19 to 32 (PPSTSSSAPATVVS) has biased composition (low complexity). The segment covering 137-149 (GDGKPSDGKEKLP) has biased composition (basic and acidic residues). Lysine 154 participates in a covalent cross-link: Glycyl lysine isopeptide (Lys-Gly) (interchain with G-Cter in ubiquitin). The span at 170 to 205 (AGKNSGASANGACSKSAESGSDGSSDGSDANSQNDS) shows a compositional bias: low complexity. Basic and acidic residues-rich tracts occupy residues 206 to 215 (GSRHNGKDGE) and 304 to 318 (SNRESARRSRLRKQA). The region spanning 295-358 (EIKRQRRKQS…EELLAENSSL (64 aa)) is the bZIP domain. Residues 297 to 316 (KRQRRKQSNRESARRSRLRK) are basic motif. Positions 323–358 (LAQRAEVLNGENSSLRAEINKLKSQYEELLAENSSL) are leucine-zipper. Polar residues predominate over residues 356–366 (SSLKNKFSSAP). Residues 372-389 (DLDKNEQEPQRSTRQDVA) are compositionally biased toward basic and acidic residues.

The protein belongs to the bZIP family. As to quaternary structure, monomer, homodimer and heterodimers with GBF1/BZIP41, GBF2/BZIP54 and GBF3/BZIP55. Heterodimers with BZIP16. Interacts with GIP1.

The protein localises to the nucleus. Functionally, transcriptional activator that binds to the G-box motif (5'-CACGTG-3') and other cis-acting elements with 5'-ACGT-3' core, such as Hex, C-box and as-1 motifs. Possesses high binding affinity to G-box, much lower affinity to Hex and C-box, and little affinity to as-1 element. G-box and G-box-like motifs are cis-acting elements defined in promoters of certain plant genes which are regulated by such diverse stimuli as light-induction or hormone control. Binds to the G-box motif 5'-CACGTG-3' of LHCB2.4 (At3g27690) promoter. May act as transcriptional activator in light-regulated expression of LHCB2.4. Probably binds DNA as monomer. DNA-binding activity is redox-dependent. This chain is bZIP transcription factor 68, found in Arabidopsis thaliana (Mouse-ear cress).